The primary structure comprises 136 residues: DNA-directed RNA polymerase subunit omega (136 aa).

Positions 81–136 (EAEAVPLLSSSPAAAAVAPQSSGDDGDIQFDRMSEEDLLRGLENLAPPTETEDEGD) are disordered. Low complexity predominate over residues 83–99 (EAVPLLSSSPAAAAVAP). The segment covering 109 to 120 (QFDRMSEEDLLR) has biased composition (basic and acidic residues).

The protein belongs to the RNA polymerase subunit omega family. The RNAP catalytic core consists of 2 alpha, 1 beta, 1 beta' and 1 omega subunit. When a sigma factor is associated with the core the holoenzyme is formed, which can initiate transcription.

It catalyses the reaction RNA(n) + a ribonucleoside 5'-triphosphate = RNA(n+1) + diphosphate. Functionally, promotes RNA polymerase assembly. Latches the N- and C-terminal regions of the beta' subunit thereby facilitating its interaction with the beta and alpha subunits. This Methylobacterium nodulans (strain LMG 21967 / CNCM I-2342 / ORS 2060) protein is DNA-directed RNA polymerase subunit omega.